Here is a 363-residue protein sequence, read N- to C-terminus: G-protein coupled receptor 78 (363 aa).

At 1–7 (MGPGEAL) the chain is on the extracellular side. Residues 8–28 (LAGLLVMVLAVALLSNALVLL) traverse the membrane as a helical segment. Over 29–47 (CCAYSAELRTRASGVLLVN) the chain is Cytoplasmic. The chain crosses the membrane as a helical span at residues 48-68 (LSLGHLLLAALDMPFTLLGVM). Residues 69–80 (RGRTPSAPGACQ) lie on the Extracellular side of the membrane. Cys79 and Cys156 are disulfide-bonded. A helical transmembrane segment spans residues 81–101 (VIGFLDTFLASNAALSVAALS). Over 102–122 (ADQWLAVGFPLRYAGRLRPRY) the chain is Cytoplasmic. The chain crosses the membrane as a helical span at residues 123–143 (AGLLLGCAWGQSLAFSGAALG). Residues 144 to 168 (CSWLGYSSAFASCSLRLPPEPERPR) lie on the Extracellular side of the membrane. The chain crosses the membrane as a helical span at residues 169–189 (FAAFTATLHAVGFVLPLAVLC). The Cytoplasmic portion of the chain corresponds to 190–242 (LTSLQVHRVARRHCQRMDTVTMKALALLADLHPSVRQRCLIQQKRRRHRATRK). Residues 243–263 (IGIAIATFLICFAPYVMTRLA) form a helical membrane-spanning segment. Topologically, residues 264–277 (ELVPFVTVNAQWGI) are extracellular. Residues 278–297 (LSKCLTYSKAVADPFTYSLL) traverse the membrane as a helical segment. Residues 298-363 (RRPFRQVLAG…ENDSCLQQTH (66 aa)) lie on the Cytoplasmic side of the membrane. The interval 340 to 363 (TPRPASTHNGSVDTENDSCLQQTH) is disordered. Residues 343–363 (PASTHNGSVDTENDSCLQQTH) are compositionally biased toward polar residues.

Belongs to the G-protein coupled receptor 1 family. As to expression, high level of expression in placenta. Expressed throughout the brain at low level. No expression detected in skeletal muscle, lung, heart, liver, pancreas, or kidney.

The protein resides in the cell membrane. Orphan receptor. Displays a significant level of constitutive activity. Its effect is mediated by G(s)-alpha protein that stimulate adenylate cyclase, resulting in an elevation of intracellular cAMP. This is G-protein coupled receptor 78 (GPR78) from Homo sapiens (Human).